We begin with the raw amino-acid sequence, 477 residues long: UDP-N-acetylmuramate--L-alanine ligase (477 aa).

122–128 is a binding site for ATP; it reads GTHGKTT.

The protein belongs to the MurCDEF family.

It localises to the cytoplasm. The catalysed reaction is UDP-N-acetyl-alpha-D-muramate + L-alanine + ATP = UDP-N-acetyl-alpha-D-muramoyl-L-alanine + ADP + phosphate + H(+). The protein operates within cell wall biogenesis; peptidoglycan biosynthesis. Functionally, cell wall formation. The chain is UDP-N-acetylmuramate--L-alanine ligase from Xylella fastidiosa (strain M12).